Here is a 277-residue protein sequence, read N- to C-terminus: Soluble NSF attachment protein 29 (277 aa).

Residues 1-11 (MSRNPFDDDYR) show a composition bias toward basic and acidic residues. Disordered regions lie at residues 1 to 30 (MSRNPFDDDYRPSAASSTMPVKSYTTMGHY), 49 to 73 (ESLDSTERSRRHLENSEKIGTSTAQ), and 117 to 170 (KFTK…ESSR). A compositionally biased stretch (polar residues) spans 14–28 (AASSTMPVKSYTTMG). The region spanning 44–106 (EKTLQESLDS…QMTQRNLNSL (63 aa)) is the t-SNARE coiled-coil homology 1 domain. Residues 49–65 (ESLDSTERSRRHLENSE) are compositionally biased toward basic and acidic residues. Positions 134 to 170 (SKSASRLSETATNLSSGGGSATFSGPSGQRTLTESSR) are enriched in polar residues. The 63-residue stretch at 179 to 241 (EAMDNQIDEN…RDQDKQMQKI (63 aa)) folds into the t-SNARE coiled-coil homology 2 domain.

The protein belongs to the SNAP-25 family.

It is found in the synapse. The protein localises to the synaptosome. Its function is as follows. SNAREs, soluble N-ethylmaleimide-sensitive factor-attachment protein receptors, are essential proteins for fusion of cellular membranes. SNAREs localized on opposing membranes assemble to form a trans-SNARE complex, an extended, parallel four alpha-helical bundle that drives membrane fusion. Plays a role in the processing and secretion of the aspartic protease hrg-7 from the intestine. This Caenorhabditis elegans protein is Soluble NSF attachment protein 29.